A 115-amino-acid chain; its full sequence is Large ribosomal subunit protein bL20 (115 aa).

The protein belongs to the bacterial ribosomal protein bL20 family.

Its function is as follows. Binds directly to 23S ribosomal RNA and is necessary for the in vitro assembly process of the 50S ribosomal subunit. It is not involved in the protein synthesizing functions of that subunit. The polypeptide is Large ribosomal subunit protein bL20 (Prochlorococcus marinus (strain AS9601)).